The chain runs to 217 residues: Neurotrophic factor BDNF precursor form (217 aa).

A propeptide spanning residues 1-108 (PMKEVSIRGQ…AANMSMRVRR (108 aa)) is cleaved from the precursor. The N-linked (GlcNAc...) asparagine glycan is linked to asparagine 101. Intrachain disulfides connect cysteine 121-cysteine 188 and cysteine 166-cysteine 217.

It belongs to the NGF-beta family.

Its subcellular location is the secreted. Functionally, promotes the survival of neuronal populations that are all located either in the central nervous system or directly connected to it. In Acrantophis dumerili (Dumeril's ground boa), this protein is Neurotrophic factor BDNF precursor form (BDNF).